The sequence spans 112 residues: Photosystem II reaction center Psb28 protein (112 aa).

This sequence belongs to the Psb28 family. As to quaternary structure, part of the photosystem II complex.

The protein localises to the plastid. It localises to the cyanelle thylakoid membrane. This Cyanophora paradoxa protein is Photosystem II reaction center Psb28 protein.